Reading from the N-terminus, the 198-residue chain is Recombination protein RecR (198 aa).

The segment at 57 to 72 (CSVCHNITDTDPCRIC) adopts a C4-type zinc-finger fold. The 96-residue stretch at 80-175 (SVICVVQDAK…KVTRIAHGLP (96 aa)) folds into the Toprim domain.

Belongs to the RecR family.

May play a role in DNA repair. It seems to be involved in an RecBC-independent recombinational process of DNA repair. It may act with RecF and RecO. In Halalkalibacterium halodurans (strain ATCC BAA-125 / DSM 18197 / FERM 7344 / JCM 9153 / C-125) (Bacillus halodurans), this protein is Recombination protein RecR.